The primary structure comprises 251 residues: Adenosylcobinamide-GDP ribazoletransferase (251 aa).

5 consecutive transmembrane segments (helical) span residues 44–64 (LVGL…LLAG), 114–134 (IGAF…VLAH), 143–163 (GALV…AACV), 177–197 (AGAT…TGVA), and 198–218 (LAGP…VVWL).

Belongs to the CobS family. The cofactor is Mg(2+).

It is found in the cell inner membrane. The catalysed reaction is alpha-ribazole + adenosylcob(III)inamide-GDP = adenosylcob(III)alamin + GMP + H(+). The enzyme catalyses alpha-ribazole 5'-phosphate + adenosylcob(III)inamide-GDP = adenosylcob(III)alamin 5'-phosphate + GMP + H(+). It functions in the pathway cofactor biosynthesis; adenosylcobalamin biosynthesis; adenosylcobalamin from cob(II)yrinate a,c-diamide: step 7/7. Joins adenosylcobinamide-GDP and alpha-ribazole to generate adenosylcobalamin (Ado-cobalamin). Also synthesizes adenosylcobalamin 5'-phosphate from adenosylcobinamide-GDP and alpha-ribazole 5'-phosphate. The chain is Adenosylcobinamide-GDP ribazoletransferase from Nitratidesulfovibrio vulgaris (strain DSM 19637 / Miyazaki F) (Desulfovibrio vulgaris).